The sequence spans 819 residues: Advillin (819 aa).

The segment at 1–731 (MSLSSAFRAV…YEQLKNELGD (731 aa)) is core. The Gelsolin-like 1 repeat unit spans residues 24–73 (MELALVPLSAHGNFYEGDCYIVLSTRRVGSLLSQNIHFWIGKDSSQDEQS). Tyrosine 85 is subject to Phosphotyrosine. Residues 109 to 116 (KQGIIYKK) and 135 to 143 (RLLHVKGKR) each bind a 1,2-diacyl-sn-glycero-3-phospho-(1D-myo-inositol-4,5-bisphosphate). Gelsolin-like repeat units follow at residues 145–185 (IQAT…GERL), 262–306 (LSVT…VEKQ), 403–454 (ENLE…DELA), 525–565 (TKAV…DERA), and 628–669 (FLVT…TEKK). The segment at 628–819 (FLVTEVTDFT…LQLKKERGLF (192 aa)) is required for interaction with F-actin. Residues 732 to 819 (ATAIVRITAD…LQLKKERGLF (88 aa)) are headpiece. Phosphotyrosine is present on residues tyrosine 748 and tyrosine 758. Residues 753-819 (DGEPKYYPVE…LQLKKERGLF (67 aa)) enclose the HP domain.

This sequence belongs to the villin/gelsolin family. In terms of assembly, associates (via C-terminus) with actin. Interacts with F-actin. Interacts with SCARF1; the interaction occurs in embryonic dorsal root ganglions at 18 dpc and induces neurite-like outgrowth. Interacts with PLCE1. Interacts with ACTR2 and ACTR3; associates with the ARP2/3 complex. In terms of tissue distribution, most highly expressed in the endometrium of the uterus, the intestinal villi and the testes. Weaker expression also detected in the brain, dorsal root ganglions and on the surface of the tongue.

The protein localises to the cytoplasm. It localises to the cytoskeleton. The protein resides in the cell projection. It is found in the lamellipodium. Its subcellular location is the cell junction. The protein localises to the focal adhesion. It localises to the neuron projection. The protein resides in the axon. Functionally, ca(2+)-regulated actin-binding protein which plays an important role in actin bundling. May have a unique function in the morphogenesis of neuronal cells which form ganglia. Required for SREC1-mediated regulation of neurite-like outgrowth. Plays a role in regenerative sensory axon outgrowth and remodeling processes after peripheral injury in neonates. Involved in the formation of long fine actin-containing filopodia-like structures in fibroblast. Plays a role in ciliogenesis. In podocytes, controls lamellipodia formation through the regulation of EGF-induced diacylglycerol generation by PLCE1 and ARP2/3 complex assembly. In Mus musculus (Mouse), this protein is Advillin.